Here is a 116-residue protein sequence, read N- to C-terminus: Spexin (116 aa).

The N-terminal stretch at M1–S26 is a signal peptide. Positions A27–R35 are excised as a propeptide. A Glutamine amide modification is found at Q49. 2 consecutive propeptides follow at residues G50 to W116 and P74 to W116. Residues F53 to S73 show a composition bias toward basic and acidic residues. The segment at F53–T80 is disordered.

The protein belongs to the spexin family.

The protein localises to the secreted. It is found in the extracellular space. It localises to the cytoplasmic vesicle. Its subcellular location is the secretory vesicle. Plays a role as a central modulator of cardiovascular and renal function and nociception. Also plays a role in energy metabolism and storage. Inhibits adrenocortical cell proliferation with minor stimulation on corticosteroid release. Its function is as follows. Acts as a ligand for galanin receptors GALR2 and GALR3. Intracerebroventricular administration of the peptide induces an increase in arterial blood pressure, a decrease in both heart rate and renal excretion and delayed natriuresis. Intraventricular administration of the peptide induces antinociceptive activity. Also induces contraction of muscarinic-like stomach smooth muscles. Intraperitoneal administration of the peptide induces a reduction in food consumption and body weight. Inhibits long chain fatty acid uptake into adipocytes. In terms of biological role, intracerebroventricular administration of the peptide induces a decrease in heart rate, but no change in arterial pressure, and an increase in urine flow rate. Intraventricular administration of the peptide induces antinociceptive activity. The protein is Spexin (SPX) of Bos taurus (Bovine).